We begin with the raw amino-acid sequence, 593 residues long: Proteasome-associated ATPase (593 aa).

Residues 5–94 (DDADSRAARW…KEEIDRLAQP (90 aa)) adopt a coiled-coil conformation. 281 to 286 (GCGKTL) serves as a coordination point for ATP. Residues 574 to 593 (GKGADAGRSIETASNTGQYL) form a disordered region. Polar residues predominate over residues 584–593 (ETASNTGQYL). The interval 592-593 (YL) is docks into pockets in the proteasome alpha-ring.

Belongs to the AAA ATPase family. As to quaternary structure, homohexamer. Assembles into a hexameric ring structure that caps the 20S proteasome core. Strongly interacts with the prokaryotic ubiquitin-like protein Pup through a hydrophobic interface; the interacting region of ARC lies in its N-terminal coiled-coil domain. There is one Pup binding site per ARC hexamer ring. Upon ATP-binding, the C-terminus of ARC interacts with the alpha-rings of the proteasome core, possibly by binding to the intersubunit pockets.

The protein operates within protein degradation; proteasomal Pup-dependent pathway. Functionally, ATPase which is responsible for recognizing, binding, unfolding and translocation of pupylated proteins into the bacterial 20S proteasome core particle. May be essential for opening the gate of the 20S proteasome via an interaction with its C-terminus, thereby allowing substrate entry and access to the site of proteolysis. Thus, the C-termini of the proteasomal ATPase may function like a 'key in a lock' to induce gate opening and therefore regulate proteolysis. The sequence is that of Proteasome-associated ATPase from Salinispora tropica (strain ATCC BAA-916 / DSM 44818 / JCM 13857 / NBRC 105044 / CNB-440).